A 335-amino-acid chain; its full sequence is Pyruvate dehydrogenase E1 component subunit beta (335 aa).

Glu-60 is a binding site for thiamine diphosphate. K(+)-binding residues include Ala-161, Ile-162, and Asn-166.

As to quaternary structure, heterodimer of an alpha and a beta chain. Thiamine diphosphate serves as cofactor.

Its subcellular location is the plastid. The protein resides in the chloroplast. It catalyses the reaction N(6)-[(R)-lipoyl]-L-lysyl-[protein] + pyruvate + H(+) = N(6)-[(R)-S(8)-acetyldihydrolipoyl]-L-lysyl-[protein] + CO2. Functionally, the pyruvate dehydrogenase complex catalyzes the overall conversion of pyruvate to acetyl-CoA and CO(2). It contains multiple copies of three enzymatic components: pyruvate dehydrogenase (E1), dihydrolipoamide acetyltransferase (E2) and lipoamide dehydrogenase (E3). This Chlorokybus atmophyticus (Soil alga) protein is Pyruvate dehydrogenase E1 component subunit beta (pdhB).